Here is a 336-residue protein sequence, read N- to C-terminus: Dihydroorotate dehydrogenase (quinone) (336 aa).

Residues 62 to 66 (AGLDK) and Thr86 each bind FMN. Substrate is bound at residue Lys66. 111-115 (NRMGF) is a binding site for substrate. 2 residues coordinate FMN: Asn139 and Asn172. Substrate is bound at residue Asn172. Residue Ser175 is the Nucleophile of the active site. Asn177 provides a ligand contact to substrate. Residues Lys217 and Thr245 each coordinate FMN. 246–247 (NT) lines the substrate pocket. FMN contacts are provided by residues Gly268, Gly297, and 318 to 319 (YS).

This sequence belongs to the dihydroorotate dehydrogenase family. Type 2 subfamily. In terms of assembly, monomer. Requires FMN as cofactor.

The protein localises to the cell membrane. It carries out the reaction (S)-dihydroorotate + a quinone = orotate + a quinol. It functions in the pathway pyrimidine metabolism; UMP biosynthesis via de novo pathway; orotate from (S)-dihydroorotate (quinone route): step 1/1. Functionally, catalyzes the conversion of dihydroorotate to orotate with quinone as electron acceptor. The sequence is that of Dihydroorotate dehydrogenase (quinone) from Serratia proteamaculans (strain 568).